Reading from the N-terminus, the 731-residue chain is MTVDPASHITIPEADLARLRHCNHHDPHGFYGWHETEAGSVIRTRQVGATQVNLLIDDTSHVMTPIGDDIFAIDLGHRERADYRLEVTWPDQEPQVKADPYYFLPTVGEMDIYLFSEGRHERLWEILGANIKTYQTALGTVRGTAFTVWAPNAIGCAVVGGFNGWNASQHPMRSMGGSGLWELFIPGIEEGEVYKFAVQTREGQRRDKADPMARRAELAPATGSIVASSEYQWQDSEWLRERSQTDLASKPMSVYEVHLGSWRWGKNYEDLATELVDYVADLGYTHVEFLPVAEHPFGGSWGYQVTGYYAPTSRWGTPDQFRALVDAFHARGIGVIMDWVPAHFPKDDWALARFDGEALYEHPDWRRGEQKDWGTLVFDFGRNEVRNFLVANALYWIEEFHIDGLRVDAVASMLYLDYSREHGEWEPNIYGGRENLEAVQFLQEMNATVLRLHPGALTIAEESTSWPGVTAPTWDGGLGFSLKWNMGWMHDTLEYFSKNPVHRAFHHSELTFSLVYAFSERFVLPISHDEVVHGKGSLWDRMPGDTWNKAAGLRTFLAYMWSHPGKKLLFMGQEFGQREEWAEGQGLPWDIVDGWQGEYHEAIRTLTRSLNGVYSDSPALHTQDFTGEGFTWNKGDDATNNILAFTRFGSDGSQMLCVFNLSGTSQPEYQLGVAAGGEWKLVLNTDDAEFLGAENDIATSVQAAATPRDNFAYSLSLHVPAMSAQFYSLQK.

Asp-408 (nucleophile) is an active-site residue. Glu-461 functions as the Proton donor in the catalytic mechanism.

It belongs to the glycosyl hydrolase 13 family. GlgB subfamily. As to quaternary structure, monomer.

The catalysed reaction is Transfers a segment of a (1-&gt;4)-alpha-D-glucan chain to a primary hydroxy group in a similar glucan chain.. Its pathway is glycan biosynthesis; glycogen biosynthesis. In terms of biological role, catalyzes the formation of the alpha-1,6-glucosidic linkages in glycogen by scission of a 1,4-alpha-linked oligosaccharide from growing alpha-1,4-glucan chains and the subsequent attachment of the oligosaccharide to the alpha-1,6 position. The protein is 1,4-alpha-glucan branching enzyme GlgB of Corynebacterium glutamicum (strain ATCC 13032 / DSM 20300 / JCM 1318 / BCRC 11384 / CCUG 27702 / LMG 3730 / NBRC 12168 / NCIMB 10025 / NRRL B-2784 / 534).